The following is a 236-amino-acid chain: Ribose-5-phosphate isomerase A (236 aa).

Residues 29–32 (SGST), 86–89 (DGAD), and 99–102 (KGGG) each bind substrate. Glutamate 108 serves as the catalytic Proton acceptor. Substrate is bound at residue lysine 126.

It belongs to the ribose 5-phosphate isomerase family. As to quaternary structure, homodimer.

It carries out the reaction aldehydo-D-ribose 5-phosphate = D-ribulose 5-phosphate. It functions in the pathway carbohydrate degradation; pentose phosphate pathway; D-ribose 5-phosphate from D-ribulose 5-phosphate (non-oxidative stage): step 1/1. Catalyzes the reversible conversion of ribose-5-phosphate to ribulose 5-phosphate. This chain is Ribose-5-phosphate isomerase A, found in Prochlorococcus marinus (strain NATL2A).